A 252-amino-acid chain; its full sequence is Glycerol-3-phosphate regulon repressor (252 aa).

Residues 3-58 form the HTH deoR-type domain; sequence QTQRHNGIIELVKQQGYVSTEELVEHFSVSPQTIRRDLNELAEQNLILRHHGGAAL. The H-T-H motif DNA-binding region spans 20–39; it reads VSTEELVEHFSVSPQTIRRD.

In terms of biological role, repressor of the glycerol-3-phosphate regulon. The chain is Glycerol-3-phosphate regulon repressor (glpR) from Escherichia coli (strain K12).